A 285-amino-acid chain; its full sequence is Bifunctional protein FolD (285 aa).

NADP(+) contacts are provided by residues 166 to 168 (GAS) and I232.

It belongs to the tetrahydrofolate dehydrogenase/cyclohydrolase family. As to quaternary structure, homodimer.

The catalysed reaction is (6R)-5,10-methylene-5,6,7,8-tetrahydrofolate + NADP(+) = (6R)-5,10-methenyltetrahydrofolate + NADPH. It carries out the reaction (6R)-5,10-methenyltetrahydrofolate + H2O = (6R)-10-formyltetrahydrofolate + H(+). It functions in the pathway one-carbon metabolism; tetrahydrofolate interconversion. In terms of biological role, catalyzes the oxidation of 5,10-methylenetetrahydrofolate to 5,10-methenyltetrahydrofolate and then the hydrolysis of 5,10-methenyltetrahydrofolate to 10-formyltetrahydrofolate. This is Bifunctional protein FolD from Buchnera aphidicola subsp. Schizaphis graminum (strain Sg).